We begin with the raw amino-acid sequence, 68 residues long: MARGNQRDLARQKNLKKQKDMAKNQKKSGDPKKRMESDAEILRQKQAAADARREAEKLEKLKAEKTRR.

Composition is skewed to basic and acidic residues over residues 1–43 (MARG…EILR) and 50–68 (DARREAEKLEKLKAEKTRR). Residues 1–68 (MARGNQRDLA…EKLKAEKTRR (68 aa)) form a disordered region. Residue Ser-37 is modified to Phosphoserine.

It belongs to the SERF family.

The protein localises to the cytoplasm. It is found in the nucleus. This is SERF-like protein YDL085C-A from Saccharomyces cerevisiae (strain ATCC 204508 / S288c) (Baker's yeast).